Here is a 308-residue protein sequence, read N- to C-terminus: Ferredoxin--NADP reductase (308 aa).

FAD-binding residues include glutamate 26, glutamine 34, tyrosine 39, valine 77, phenylalanine 106, aspartate 266, and threonine 306.

It belongs to the ferredoxin--NADP reductase type 2 family. In terms of assembly, homodimer. Requires FAD as cofactor.

The enzyme catalyses 2 reduced [2Fe-2S]-[ferredoxin] + NADP(+) + H(+) = 2 oxidized [2Fe-2S]-[ferredoxin] + NADPH. This Lactobacillus delbrueckii subsp. bulgaricus (strain ATCC 11842 / DSM 20081 / BCRC 10696 / JCM 1002 / NBRC 13953 / NCIMB 11778 / NCTC 12712 / WDCM 00102 / Lb 14) protein is Ferredoxin--NADP reductase.